The primary structure comprises 379 residues: UDP-4-amino-4-deoxy-L-arabinose--oxoglutarate aminotransferase (379 aa).

Lys182 bears the N6-(pyridoxal phosphate)lysine mark.

It belongs to the DegT/DnrJ/EryC1 family. ArnB subfamily. As to quaternary structure, homodimer. It depends on pyridoxal 5'-phosphate as a cofactor.

It carries out the reaction UDP-4-amino-4-deoxy-beta-L-arabinose + 2-oxoglutarate = UDP-beta-L-threo-pentopyranos-4-ulose + L-glutamate. Its pathway is nucleotide-sugar biosynthesis; UDP-4-deoxy-4-formamido-beta-L-arabinose biosynthesis; UDP-4-deoxy-4-formamido-beta-L-arabinose from UDP-alpha-D-glucuronate: step 2/3. It functions in the pathway bacterial outer membrane biogenesis; lipopolysaccharide biosynthesis. Catalyzes the conversion of UDP-4-keto-arabinose (UDP-Ara4O) to UDP-4-amino-4-deoxy-L-arabinose (UDP-L-Ara4N). The modified arabinose is attached to lipid A and is required for resistance to polymyxin and cationic antimicrobial peptides. The protein is UDP-4-amino-4-deoxy-L-arabinose--oxoglutarate aminotransferase of Escherichia fergusonii (strain ATCC 35469 / DSM 13698 / CCUG 18766 / IAM 14443 / JCM 21226 / LMG 7866 / NBRC 102419 / NCTC 12128 / CDC 0568-73).